Reading from the N-terminus, the 132-residue chain is Small ribosomal subunit protein uS12 (132 aa).

Residue aspartate 89 is modified to 3-methylthioaspartic acid. The interval 101–132 (TLDASGAAGPSSTNKATRNRKRSKYGVKRPKA) is disordered. Residues 117–132 (TRNRKRSKYGVKRPKA) show a composition bias toward basic residues.

The protein belongs to the universal ribosomal protein uS12 family. As to quaternary structure, part of the 30S ribosomal subunit. Contacts proteins S8 and S17. May interact with IF1 in the 30S initiation complex.

Its function is as follows. With S4 and S5 plays an important role in translational accuracy. Interacts with and stabilizes bases of the 16S rRNA that are involved in tRNA selection in the A site and with the mRNA backbone. Located at the interface of the 30S and 50S subunits, it traverses the body of the 30S subunit contacting proteins on the other side and probably holding the rRNA structure together. The combined cluster of proteins S8, S12 and S17 appears to hold together the shoulder and platform of the 30S subunit. The chain is Small ribosomal subunit protein uS12 from Sorangium cellulosum (strain So ce56) (Polyangium cellulosum (strain So ce56)).